The following is a 312-amino-acid chain: uncharacterized protein (312 aa).

The first 19 residues, 1–19 (MFSKYLVTASSLFVALTSA), serve as a signal peptide directing secretion.

This is an uncharacterized protein from Saccharomyces cerevisiae (strain ATCC 204508 / S288c) (Baker's yeast).